Here is a 463-residue protein sequence, read N- to C-terminus: GTPase Der (463 aa).

2 consecutive EngA-type G domains span residues 2–164 (KKII…PKSK) and 198–369 (IKIG…KNYT). Residues 8 to 15 (GRPNVGKS), 55 to 59 (DSGGL), 116 to 119 (NKVD), 204 to 211 (GRVNVGKS), 251 to 255 (DTAGI), and 315 to 318 (NKWD) each bind GTP. Positions 370 to 454 (QKMKTSRLNE…PVILIPKNRS (85 aa)) constitute a KH-like domain.

The protein belongs to the TRAFAC class TrmE-Era-EngA-EngB-Septin-like GTPase superfamily. EngA (Der) GTPase family. As to quaternary structure, associates with the 50S ribosomal subunit.

Functionally, GTPase that plays an essential role in the late steps of ribosome biogenesis. The polypeptide is GTPase Der (Campylobacter fetus subsp. fetus (strain 82-40)).